Here is a 572-residue protein sequence, read N- to C-terminus: Far upstream element-binding protein 3 (572 aa).

At alanine 2 the chain carries N-acetylalanine. Glycyl lysine isopeptide (Lys-Gly) (interchain with G-Cter in SUMO2) cross-links involve residues lysine 15 and lysine 57. Threonine 76 carries the post-translational modification Phosphothreonine. KH domains lie at 77 to 141 (VITE…KRLL), 162 to 228 (STIQ…REMV), 253 to 317 (GGSI…AHII), and 354 to 421 (VQEI…RQLI). At serine 296 the chain carries Phosphoserine. Residues 426–521 (GGTNLGAPGA…SQPNYSKAWE (96 aa)) are disordered. Residues 496–514 (QQPTQQVPSQQSQPQSSQP) are compositionally biased toward low complexity. Serine 539 and serine 569 each carry phosphoserine.

As to expression, detected in a number of cell lines.

It localises to the nucleus. In terms of biological role, may interact with single-stranded DNA from the far-upstream element (FUSE). May activate gene expression. This Homo sapiens (Human) protein is Far upstream element-binding protein 3 (FUBP3).